The following is a 421-amino-acid chain: NADH-dependent phenylglyoxylate dehydrogenase subunit epsilon (421 aa).

FAD-binding positions include 15-18, 39-40, and 279-297; these read SSHA, TR, and ATAQ…NAIL.

This sequence belongs to the FAD-dependent oxidoreductase family. In terms of assembly, dimer of heteropentamers composed of an alpha (PadG), a beta (PadI), a gamma (PadE), a delta (PadF) and an epsilon (PadH) subunit. The cofactor is FAD.

It carries out the reaction phenylglyoxylate + NAD(+) + CoA = benzoyl-CoA + CO2 + NADH. With respect to regulation, activated by magnesium ions and thiamine diphosphate. Its function is as follows. Involved in the anaerobic metabolism of phenylalanine and phenylacetate. Catalyzes the oxidative decarboxylation of phenylglyoxylate to benzoyl-CoA and CO(2). It can also react slowly with 2-oxo-3-methylbutanoate and use different electron acceptors such as benzyl viologen, methyl viologen, FAD or FMN, but NAD seems to be the physiological electron acceptor. Also catalyzes an isotope exchange between CO(2) and the carboxyl group which proves partial or complete reversibility of the oxidative decarboxylation reaction. This chain is NADH-dependent phenylglyoxylate dehydrogenase subunit epsilon (padH), found in Aromatoleum evansii (Azoarcus evansii).